Consider the following 1236-residue polypeptide: ATP-dependent helicase/nuclease subunit A (1236 aa).

The UvrD-like helicase ATP-binding domain occupies 4 to 473 (VKWTKEQQQA…VNLFKNFRSR (470 aa)). 25–32 (AAAGSGKT) is a binding site for ATP. Residues 512 to 806 (YEDKSLVGGP…RIMSIHKSKG (295 aa)) form the UvrD-like helicase C-terminal domain.

Belongs to the helicase family. AddA subfamily. As to quaternary structure, heterodimer of AddA and AddB/RexB. Requires Mg(2+) as cofactor.

The enzyme catalyses Couples ATP hydrolysis with the unwinding of duplex DNA by translocating in the 3'-5' direction.. It catalyses the reaction ATP + H2O = ADP + phosphate + H(+). In terms of biological role, the heterodimer acts as both an ATP-dependent DNA helicase and an ATP-dependent, dual-direction single-stranded exonuclease. Recognizes the chi site generating a DNA molecule suitable for the initiation of homologous recombination. The AddA nuclease domain is required for chi fragment generation; this subunit has the helicase and 3' -&gt; 5' nuclease activities. This is ATP-dependent helicase/nuclease subunit A from Clostridium novyi (strain NT).